We begin with the raw amino-acid sequence, 446 residues long: Peptide chain release factor 1, mitochondrial (446 aa).

Residues M1–C62 constitute a mitochondrion transit peptide. The GGQ domain stretch occupies residues P298 to I362. Residues G312–Q314 carry the GGQ motif. Q314 carries the N5-methylglutamine modification.

This sequence belongs to the prokaryotic/mitochondrial release factor family. Post-translationally, methylation of glutamine in the GGQ triplet by HEMK1 is conserved from bacteria to mammals.

Its subcellular location is the mitochondrion. Mitochondrial peptide chain release factor that directs the termination of translation in response to the peptide chain non-canonical stop codons AGG and AGA. Non-canonical termination codons AGG and AGA are found at the end of MT-CO1/COX1 and MT-ND6/ND6 open reading frames, respectively. Recognizes non-canonical stop codons via a network of interactions between the codon, MTRF1 and the ribosomal RNA (rRNA): in contrast to other translation release factors, which identify the codon in the A-site via direct interactions of amino acid side chains with the bases, MTRF1 repositions the first 2 bases of the stop codon to use an intricate network of interactions that includes residues of the release factor, the rRNA of the small ribosomal subunit, as well as neighboring bases of the mRNA. In Mus musculus (Mouse), this protein is Peptide chain release factor 1, mitochondrial.